We begin with the raw amino-acid sequence, 120 residues long: Cell division protein FtsL (120 aa).

Over 1-36 (MTNLAVKYKQQAQEEVQIQTPPQQMAKPKVKAKITR) the chain is Cytoplasmic. A helical membrane pass occupies residues 37 to 57 (IEKLLYVAFIGFLLYACVAFI). Topologically, residues 58–120 (GNKAGLYQVN…INANNVKGLK (63 aa)) are extracellular.

It belongs to the FtsL family.

The protein resides in the cell membrane. Essential cell division protein. This chain is Cell division protein FtsL, found in Bacillus cereus (strain ATCC 14579 / DSM 31 / CCUG 7414 / JCM 2152 / NBRC 15305 / NCIMB 9373 / NCTC 2599 / NRRL B-3711).